The chain runs to 475 residues: MSPKTETKASVGFKAGVKDYRLTYYTPEYQTKDTDILAAFRVTPQPGVPPEEAGAAVAAESSTGTWTTVWTDGLTSLDRYKGRCYDIEPVAGEESQFIAFVAYPLDLFEEGSVTNLFTSIVGNVFGFKALRALRLEDLRIPPAYSKTFQGPPHGIQVERDKLNKYGRPLLGCTIKPKLGLSAKNYGRAVYECLRGGLDFTKDDENVNSQPFMRWRDRFVFCAEAIYKAQAETGEIKGHYLNATAGTCEEMMKRAVFARELGVPIVMHDYLTGGFTANTSLAHYCRDNGLLLHIHRAMHAVIDRQKNHGMHFRVLAKALRMSGGDHIHGGTVVGKLEGEREITLGFVDLLRDDFIEKDRSRGIYFTQDWVSMPGVLPVASGGIHVWHMPALTEIFGDDSVLQFGGGTLGHPWGNAPGAVANRVALEACVQARNEGRDLAREGNEVIREASKWSPELAAACEIWKEIKFEFEAVDTI.

The propeptide occupies 1–2; the sequence is MS. Pro-3 bears the N-acetylproline mark. Lys-14 carries the N6,N6,N6-trimethyllysine modification. 2 residues coordinate substrate: Asn-123 and Thr-173. The active-site Proton acceptor is the Lys-175. Lys-177 serves as a coordination point for substrate. Residues Lys-201, Asp-203, and Glu-204 each coordinate Mg(2+). An N6-carboxylysine modification is found at Lys-201. His-294 serves as the catalytic Proton acceptor. Residues Arg-295, His-327, and Ser-379 each coordinate substrate.

This sequence belongs to the RuBisCO large chain family. Type I subfamily. As to quaternary structure, heterohexadecamer of 8 large chains and 8 small chains; disulfide-linked. The disulfide link is formed within the large subunit homodimers. Mg(2+) is required as a cofactor. In terms of processing, the disulfide bond which can form in the large chain dimeric partners within the hexadecamer appears to be associated with oxidative stress and protein turnover.

It is found in the plastid. Its subcellular location is the chloroplast. It carries out the reaction 2 (2R)-3-phosphoglycerate + 2 H(+) = D-ribulose 1,5-bisphosphate + CO2 + H2O. It catalyses the reaction D-ribulose 1,5-bisphosphate + O2 = 2-phosphoglycolate + (2R)-3-phosphoglycerate + 2 H(+). Functionally, ruBisCO catalyzes two reactions: the carboxylation of D-ribulose 1,5-bisphosphate, the primary event in carbon dioxide fixation, as well as the oxidative fragmentation of the pentose substrate in the photorespiration process. Both reactions occur simultaneously and in competition at the same active site. This is Ribulose bisphosphate carboxylase large chain from Picea abies (Norway spruce).